Consider the following 819-residue polypeptide: Advillin (819 aa).

The tract at residues 1-731 (MSLSSAFRTV…YEQLKNELGD (731 aa)) is core. The Gelsolin-like 1 repeat unit spans residues 24-105 (MELVLVPLSA…VQYHESDTFR (82 aa)). Residue tyrosine 85 is modified to Phosphotyrosine. Residues 109 to 116 (KRGIIYKK) and 135 to 143 (RLLHVKGKR) contribute to the a 1,2-diacyl-sn-glycero-3-phospho-(1D-myo-inositol-4,5-bisphosphate) site. Gelsolin-like repeat units lie at residues 144 to 215 (NIRA…KEAA), 265 to 339 (TEVA…SAMF), 407 to 486 (LVPV…RHFM), 524 to 592 (NTKA…PEFW), and 631 to 704 (TEVT…PPTF). Residues 628 to 819 (FLVTEVTDFT…LQLKKEAGLF (192 aa)) are required for interaction with F-actin. The segment at 731–819 (DATAIVRITT…LQLKKEAGLF (89 aa)) is headpiece. In terms of domain architecture, HP spans 753–819 (ESGPKYYPVE…LQLKKEAGLF (67 aa)). Position 758 is a phosphotyrosine (tyrosine 758).

This sequence belongs to the villin/gelsolin family. In terms of assembly, associates (via C-terminus) with actin. Interacts with F-actin. Interacts with SCARF1; the interaction occurs in embryonic dorsal root ganglions at 18 dpc and induces neurite-like outgrowth. Interacts with PLCE1. Interacts with ACTR2 and ACTR3; associates with the ARP2/3 complex. As to expression, expressed in dorsal root ganglion (DRG) neurons and superior cervical ganglia (SCG). Expressed in podocytes.

Its subcellular location is the cytoplasm. It is found in the cytoskeleton. The protein localises to the cell projection. It localises to the neuron projection. The protein resides in the axon. Its subcellular location is the lamellipodium. It is found in the cell junction. The protein localises to the focal adhesion. Functionally, ca(2+)-regulated actin-binding protein which plays an important role in actin bundling. May have a unique function in the morphogenesis of neuronal cells which form ganglia. Required for SREC1-mediated regulation of neurite-like outgrowth. Plays a role in regenerative sensory axon outgrowth and remodeling processes after peripheral injury in neonates. Involved in the formation of long fine actin-containing filopodia-like structures in fibroblast. Plays a role in ciliogenesis. In podocytes, controls lamellipodia formation through the regulation of EGF-induced diacylglycerol generation by PLCE1 and ARP2/3 complex assembly. The polypeptide is Advillin (Rattus norvegicus (Rat)).